A 136-amino-acid chain; its full sequence is Large ribosomal subunit protein uL16 (136 aa).

It belongs to the universal ribosomal protein uL16 family. As to quaternary structure, part of the 50S ribosomal subunit.

Functionally, binds 23S rRNA and is also seen to make contacts with the A and possibly P site tRNAs. This chain is Large ribosomal subunit protein uL16, found in Mesomycoplasma hyopneumoniae (strain 232) (Mycoplasma hyopneumoniae).